The following is a 284-amino-acid chain: Bifunctional protein FolD (284 aa).

Residues glycine 166–serine 168 and isoleucine 232 each bind NADP(+).

It belongs to the tetrahydrofolate dehydrogenase/cyclohydrolase family. Homodimer.

The enzyme catalyses (6R)-5,10-methylene-5,6,7,8-tetrahydrofolate + NADP(+) = (6R)-5,10-methenyltetrahydrofolate + NADPH. It catalyses the reaction (6R)-5,10-methenyltetrahydrofolate + H2O = (6R)-10-formyltetrahydrofolate + H(+). The protein operates within one-carbon metabolism; tetrahydrofolate interconversion. Functionally, catalyzes the oxidation of 5,10-methylenetetrahydrofolate to 5,10-methenyltetrahydrofolate and then the hydrolysis of 5,10-methenyltetrahydrofolate to 10-formyltetrahydrofolate. The sequence is that of Bifunctional protein FolD from Pseudomonas putida (strain W619).